Here is a 197-residue protein sequence, read N- to C-terminus: Recombination protein RecR (197 aa).

Residues 56–71 (CNVCFHFSADPICEIC) form a C4-type zinc finger. Residues 79-173 (QTICVVADSR…KVTRIAFGLP (95 aa)) enclose the Toprim domain.

This sequence belongs to the RecR family.

Its function is as follows. May play a role in DNA repair. It seems to be involved in an RecBC-independent recombinational process of DNA repair. It may act with RecF and RecO. The sequence is that of Recombination protein RecR from Rippkaea orientalis (strain PCC 8801 / RF-1) (Cyanothece sp. (strain PCC 8801)).